The sequence spans 193 residues: Xanthine phosphoribosyltransferase (193 aa).

Residues Leu20 and Asn27 each coordinate xanthine. 129 to 133 (ANGKA) contributes to the 5-phospho-alpha-D-ribose 1-diphosphate binding site. Residue Lys157 coordinates xanthine.

The protein belongs to the purine/pyrimidine phosphoribosyltransferase family. Xpt subfamily. Homodimer.

It localises to the cytoplasm. It catalyses the reaction XMP + diphosphate = xanthine + 5-phospho-alpha-D-ribose 1-diphosphate. It functions in the pathway purine metabolism; XMP biosynthesis via salvage pathway; XMP from xanthine: step 1/1. Converts the preformed base xanthine, a product of nucleic acid breakdown, to xanthosine 5'-monophosphate (XMP), so it can be reused for RNA or DNA synthesis. This chain is Xanthine phosphoribosyltransferase, found in Bifidobacterium longum (strain NCC 2705).